The sequence spans 370 residues: Ferrochelatase (370 aa).

Histidine 210 and glutamate 291 together coordinate Fe cation.

This sequence belongs to the ferrochelatase family.

It is found in the cytoplasm. It catalyses the reaction heme b + 2 H(+) = protoporphyrin IX + Fe(2+). The protein operates within porphyrin-containing compound metabolism; protoheme biosynthesis; protoheme from protoporphyrin-IX: step 1/1. In terms of biological role, catalyzes the ferrous insertion into protoporphyrin IX. This chain is Ferrochelatase, found in Marinobacter nauticus (strain ATCC 700491 / DSM 11845 / VT8) (Marinobacter aquaeolei).